The chain runs to 100 residues: Urease subunit gamma (100 aa).

Belongs to the urease gamma subunit family. In terms of assembly, heterotrimer of UreA (gamma), UreB (beta) and UreC (alpha) subunits. Three heterotrimers associate to form the active enzyme.

The protein resides in the cytoplasm. The enzyme catalyses urea + 2 H2O + H(+) = hydrogencarbonate + 2 NH4(+). It functions in the pathway nitrogen metabolism; urea degradation; CO(2) and NH(3) from urea (urease route): step 1/1. The sequence is that of Urease subunit gamma from Streptomyces griseus subsp. griseus (strain JCM 4626 / CBS 651.72 / NBRC 13350 / KCC S-0626 / ISP 5235).